The primary structure comprises 227 residues: 7-cyano-7-deazaguanine synthase (227 aa).

7 to 17 (VSGGMDSLVAT) provides a ligand contact to ATP. Residues C187, C195, C198, and C201 each coordinate Zn(2+).

Belongs to the QueC family. It depends on Zn(2+) as a cofactor.

It catalyses the reaction 7-carboxy-7-deazaguanine + NH4(+) + ATP = 7-cyano-7-deazaguanine + ADP + phosphate + H2O + H(+). It functions in the pathway purine metabolism; 7-cyano-7-deazaguanine biosynthesis. Its function is as follows. Catalyzes the ATP-dependent conversion of 7-carboxy-7-deazaguanine (CDG) to 7-cyano-7-deazaguanine (preQ(0)). This is 7-cyano-7-deazaguanine synthase from Chlorobaculum parvum (strain DSM 263 / NCIMB 8327) (Chlorobium vibrioforme subsp. thiosulfatophilum).